Consider the following 90-residue polypeptide: NELL2-interacting cell ontogeny regulator 1 (90 aa).

The N-terminal stretch at 1 to 26 (MVSSGYLQAVMLLLAVQLLCFRPSDA) is a signal peptide.

Belongs to the NICOL family.

The protein localises to the secreted. Its function is as follows. mRNA-binding protein which interacts with a range of target mRNAs and may promote extracellular matrix production. The chain is NELL2-interacting cell ontogeny regulator 1 from Salmo salar (Atlantic salmon).